Consider the following 557-residue polypeptide: Potassium-transporting ATPase potassium-binding subunit (557 aa).

Helical transmembrane passes span 5-25, 63-83, 132-152, 170-190, 253-273, 283-303, 329-349, 356-376, 379-399, 416-436, 484-504, and 526-546; these read GFLL…PLGS, LSAI…MLLG, GLTV…FALI, LLRI…LFFI, FVQM…FGEV, LLWA…WAEV, VLVS…AVIA, ALGG…FGGV, GLYG…LMIG, LTAL…ALAM, LLAL…MAIA, and LFVG…FIPA.

Belongs to the KdpA family. As to quaternary structure, the system is composed of three essential subunits: KdpA, KdpB and KdpC.

It is found in the cell inner membrane. Its function is as follows. Part of the high-affinity ATP-driven potassium transport (or Kdp) system, which catalyzes the hydrolysis of ATP coupled with the electrogenic transport of potassium into the cytoplasm. This subunit binds the periplasmic potassium ions and delivers the ions to the membrane domain of KdpB through an intramembrane tunnel. This Escherichia coli O6:H1 (strain CFT073 / ATCC 700928 / UPEC) protein is Potassium-transporting ATPase potassium-binding subunit.